The following is a 253-amino-acid chain: Ribosomal RNA small subunit methyltransferase J (253 aa).

S-adenosyl-L-methionine contacts are provided by residues 123 to 124 (ER) and D176.

The protein belongs to the methyltransferase superfamily. RsmJ family.

Its subcellular location is the cytoplasm. The catalysed reaction is guanosine(1516) in 16S rRNA + S-adenosyl-L-methionine = N(2)-methylguanosine(1516) in 16S rRNA + S-adenosyl-L-homocysteine + H(+). In terms of biological role, specifically methylates the guanosine in position 1516 of 16S rRNA. This Magnetococcus marinus (strain ATCC BAA-1437 / JCM 17883 / MC-1) protein is Ribosomal RNA small subunit methyltransferase J.